The primary structure comprises 497 residues: Probable D-lactate dehydrogenase, mitochondrial (497 aa).

In terms of domain architecture, FAD-binding PCMH-type spans 65 to 246 (HRCRPPDVVV…TKATLRLYGV (182 aa)).

This sequence belongs to the FAD-binding oxidoreductase/transferase type 4 family. Requires FAD as cofactor.

It is found in the mitochondrion. It catalyses the reaction (R)-lactate + 2 Fe(III)-[cytochrome c] = 2 Fe(II)-[cytochrome c] + pyruvate + 2 H(+). Involved in D-lactate, but not L-lactate catabolic process. In Danio rerio (Zebrafish), this protein is Probable D-lactate dehydrogenase, mitochondrial (ldhd).